A 434-amino-acid polypeptide reads, in one-letter code: Nicotinate phosphoribosyltransferase (434 aa).

A Phosphohistidine; by autocatalysis modification is found at His-242.

It belongs to the NAPRTase family. In terms of processing, transiently phosphorylated on a His residue during the reaction cycle. Phosphorylation strongly increases the affinity for substrates and increases the rate of nicotinate D-ribonucleotide production. Dephosphorylation regenerates the low-affinity form of the enzyme, leading to product release.

It carries out the reaction nicotinate + 5-phospho-alpha-D-ribose 1-diphosphate + ATP + H2O = nicotinate beta-D-ribonucleotide + ADP + phosphate + diphosphate. It functions in the pathway cofactor biosynthesis; NAD(+) biosynthesis; nicotinate D-ribonucleotide from nicotinate: step 1/1. In terms of biological role, catalyzes the synthesis of beta-nicotinate D-ribonucleotide from nicotinate and 5-phospho-D-ribose 1-phosphate at the expense of ATP. The protein is Nicotinate phosphoribosyltransferase of Chelativorans sp. (strain BNC1).